The sequence spans 4146 residues: DNA-dependent protein kinase catalytic subunit (4146 aa).

HEAT repeat units follow at residues 308–343, 925–962, 1026–1062, and 1075–1111; these read DDYQ…LKQI, VIYL…VAFM, QDTV…LRWS, and PVNT…YRDF. 2 TPR repeats span residues 1745 to 1778 and 1974 to 2007; these read PMKS…SQSP and VFSE…QRNY. S2075 is subject to Phosphoserine; by autocatalysis. T2631 carries the post-translational modification Phosphothreonine; by autocatalysis. Position 2634 is a phosphoserine; by autocatalysis (S2634). 2 positions are modified to phosphothreonine; by autocatalysis: T2659 and T2668. The region spanning 2873–3556 is the FAT domain; the sequence is FIACVQDMCY…VYPFMVSGES (684 aa). In terms of domain architecture, PI3K/PI4K catalytic spans 3739 to 4071; that stretch reads FDERVSVMAS…IHCAKRKLDG (333 aa). The G-loop stretch occupies residues 3745–3751; it reads VMASIRK. Residues 3937–3945 are catalytic loop; the sequence is GIGDRHLSN. An activation loop region spans residues 3957–3982; sequence GIDFGHAFGTATQFLPVPELMPFRLT. Positions 4114–4146 constitute an FATC domain; sequence DGLTEETQVQCLIDQATDPNILGRVWKGWEPWI.

It belongs to the PI3/PI4-kinase family. In terms of assembly, DNA-PK is a heterotrimer of prkdc and the Ku dimer (composed of xrcc6/Ku70 and xrcc5/Ku86). Component of the core long-range non-homologous end joining (NHEJ) complex (also named DNA-PK complex) composed of prkdc, lig4, xrcc4, xrcc6/ku70, xrcc5/ku86 and nhej1/xlf. Additional component of the NHEJ complex includes paxx. Following autophosphorylation, prkdc dissociates from DNA. Post-translationally, autophosphorylated at two clusters, the T2609 cluster and the S2056 cluster. Autophosphorylated on Ser-2075, Thr-2631, Thr-2659 and Thr-2668. Ser-2075 and Thr-2668 are DNA damage-inducible phosphorylation sites (inducible with ionizing radiation, IR) dephosphorylated by PPP5C. Autophosphorylation induces a conformational change that leads to remodeling of the DNA-PK complex, requisite for efficient end processing and DNA repair. Autophosphorylation in trans within DNA-PK complexes loaded on DNA ends leads to the dissociation of PRKDC from DNA and the transition into the short-range NHEJ complex. Autophosphorylation of the T2609 cluster is required for hematopoietic development and protein synthesis in erythrocytes precursors.

It localises to the nucleus. It is found in the nucleolus. It carries out the reaction L-seryl-[protein] + ATP = O-phospho-L-seryl-[protein] + ADP + H(+). The enzyme catalyses L-threonyl-[protein] + ATP = O-phospho-L-threonyl-[protein] + ADP + H(+). Serine/threonine-protein kinase that acts as a molecular sensor for DNA damage. Involved in DNA nonhomologous end joining (NHEJ) required for double-strand break (DSB) repair and V(D)J recombination. Must be bound to DNA to express its catalytic properties. Promotes processing of hairpin DNA structures in V(D)J recombination by activation of the hairpin endonuclease artemis (DCLRE1C). Recruited by XRCC5 and XRCC6 to DNA ends and is required to (1) protect and align broken ends of DNA, thereby preventing their degradation, (2) and sequester the DSB for repair by NHEJ. Acts as a scaffold protein to aid the localization of DNA repair proteins to the site of damage. The assembly of the DNA-PK complex at DNA ends is also required for the NHEJ ligation step. Found at the ends of chromosomes, suggesting a further role in the maintenance of telomeric stability and the prevention of chromosomal end fusion. As part of the DNA-PK complex, involved in the early steps of ribosome assembly by promoting the processing of precursor rRNA into mature 18S rRNA in the small-subunit processome. Recognizes the substrate consensus sequence [ST]-Q. Phosphorylates 'Ser-139' of histone variant H2AX, thereby regulating DNA damage response mechanism. This Xenopus laevis (African clawed frog) protein is DNA-dependent protein kinase catalytic subunit (prkdc).